A 273-amino-acid polypeptide reads, in one-letter code: 4-hydroxy-tetrahydrodipicolinate reductase (273 aa).

Residues 12 to 17 and E38 contribute to the NAD(+) site; that span reads GAGGRM. Residue R39 coordinates NADP(+). NAD(+)-binding positions include 102 to 104 and 126 to 129; these read GTT and AANF. H159 acts as the Proton donor/acceptor in catalysis. H160 is a (S)-2,3,4,5-tetrahydrodipicolinate binding site. Residue K163 is the Proton donor of the active site. 169–170 is a binding site for (S)-2,3,4,5-tetrahydrodipicolinate; sequence GT.

Belongs to the DapB family. As to quaternary structure, homotetramer.

The protein resides in the cytoplasm. It carries out the reaction (S)-2,3,4,5-tetrahydrodipicolinate + NAD(+) + H2O = (2S,4S)-4-hydroxy-2,3,4,5-tetrahydrodipicolinate + NADH + H(+). The catalysed reaction is (S)-2,3,4,5-tetrahydrodipicolinate + NADP(+) + H2O = (2S,4S)-4-hydroxy-2,3,4,5-tetrahydrodipicolinate + NADPH + H(+). It functions in the pathway amino-acid biosynthesis; L-lysine biosynthesis via DAP pathway; (S)-tetrahydrodipicolinate from L-aspartate: step 4/4. In terms of biological role, catalyzes the conversion of 4-hydroxy-tetrahydrodipicolinate (HTPA) to tetrahydrodipicolinate. This Salmonella schwarzengrund (strain CVM19633) protein is 4-hydroxy-tetrahydrodipicolinate reductase.